The primary structure comprises 2198 residues: RNA-directed RNA polymerase L (2198 aa).

The segment at lysine 26–cysteine 284 is endonuclease. Mn(2+) contacts are provided by glutamate 51, aspartate 89, and glutamate 102. Residue lysine 115 is part of the active site. A RdRp catalytic domain is found at cysteine 1161–valine 1359. Residue aspartate 1319 participates in Mg(2+) binding.

Belongs to the Bunyavirales RNA polymerase family. In terms of assembly, homomultimer; the oligomeric structure is essential for the polymerase activity. Interacts with nucleoprotein N. Interacts with protein Z; this interaction inhibits viral transcription and replication, Z partially blocks the product exit tunnel for the releasing nascent RNA product. Requires Mn(2+) as cofactor. Mg(2+) serves as cofactor.

The protein localises to the virion. It localises to the host cytoplasm. It catalyses the reaction RNA(n) + a ribonucleoside 5'-triphosphate = RNA(n+1) + diphosphate. RNA-dependent RNA polymerase, which is responsible for the replication and transcription of the viral RNA genome using antigenomic RNA as an intermediate. During transcription, synthesizes subgenomic RNAs and assures their capping by a cap-snatching mechanism, which involves the endonuclease activity cleaving the host capped pre-mRNAs. These short capped RNAs are then used as primers for viral transcription. The 3'-end of subgenomic mRNAs molecules are heterogeneous and not polyadenylated. The replicase function is to direct synthesis of antigenomic and genomic RNA which are encapsidated and non capped. As a consequence of the use of the same enzyme for both transcription and replication, these mechanisms need to be well coordinated. These processes may be regulated by proteins N and Z in a dose-dependent manner. Z protein inhibits the viral polymerase L und thus the viral transcription and RNA synthesis. The chain is RNA-directed RNA polymerase L from Homo sapiens (Human).